A 182-amino-acid polypeptide reads, in one-letter code: Nascent polypeptide-associated complex subunit alpha (182 aa).

One can recognise an NAC-A/B domain in the interval 17–81; it reads NKNEKKAKEL…AKVDDMNQRI (65 aa). The segment at 120-148 is disordered; sequence ASLQGGESNADAAEDDNEEVDETGINPKD. Positions 131–141 are enriched in acidic residues; it reads AAEDDNEEVDE. The 39-residue stretch at 144–182 folds into the UBA domain; sequence INPKDIDLIVEQTRVSRGSAVKALKKHDGDMVNALMELS.

The protein belongs to the NAC-alpha family. In terms of assembly, part of the nascent polypeptide-associated complex (NAC), consisting of EGD2 and EGD1. NAC associates with ribosomes via EGD1.

Its subcellular location is the cytoplasm. It is found in the nucleus. Its function is as follows. Component of the nascent polypeptide-associated complex (NAC), a dynamic component of the ribosomal exit tunnel, protecting the emerging polypeptides from interaction with other cytoplasmic proteins to ensure appropriate nascent protein targeting. The NAC complex also promotes mitochondrial protein import by enhancing productive ribosome interactions with the outer mitochondrial membrane and blocks the inappropriate interaction of ribosomes translating non-secretory nascent polypeptides with translocation sites in the membrane of the endoplasmic reticulum. EGD2 may also be involved in transcription regulation. In Lodderomyces elongisporus (strain ATCC 11503 / CBS 2605 / JCM 1781 / NBRC 1676 / NRRL YB-4239) (Yeast), this protein is Nascent polypeptide-associated complex subunit alpha (EGD2).